The sequence spans 225 residues: MHTTQKDTTYTKIFVGGLPYHTTDSSLRKYFEVFGDIEEAVVITDRQTGKSRGYGFVTMADRAAAERACKDPNPIIDGRKANVNLAYLGAKPRIMQPGFAFGVQQLHPALIQRPFGIPAHYVYPQAFVQPGVVIPHVQPAAAAASTTPYIGYTGAAYAQYSAAAAAYEQYPYAASPAAAAGYVAAGGYGYAVQQPITAAAPGTAAAAAAAFGQYQPQQLQTDRMQ.

The RRM domain occupies 11 to 88 (TKIFVGGLPY…RKANVNLAYL (78 aa)).

The protein localises to the nucleus. The protein resides in the cytoplasm. Multifunctional RNA-binding protein involved in the regulation of pre-mRNA splicing, mRNA stability and mRNA translation important for cell fate decision and differentiation. Plays a major role in pre-mRNA alternative splicing regulation. Mediates preferentially muscle-specific exon inclusion in numerous mRNAs important for striated cardiac and skeletal muscle cell differentiation. Binds to intronic splicing enhancer (ISE) composed of stretches of GU-rich motifs localized in flanking intron of exon that will be included by alternative splicing. Involved in embryonic stem cell (ESC) transition to cardiac cell differentiation by promoting pre-mRNA alternative splicing events of several pluripotency and/or differentiation genes. Plays a role in the regulation of mRNA stability and mRNA translation to which it is bound. Involved in myogenic differentiation by regulating MYOG levels. Binds to a huge amount of mRNAs. Involved in embryonic heart development and myogenic differentiation of somitic muscle progenitors. The protein is RNA-binding protein 24 of Gallus gallus (Chicken).